Consider the following 232-residue polypeptide: Phosphatidylserine decarboxylase proenzyme (232 aa).

The active-site Schiff-base intermediate with substrate; via pyruvic acid is the serine 190. A Pyruvic acid (Ser); by autocatalysis modification is found at serine 190.

This sequence belongs to the phosphatidylserine decarboxylase family. PSD-A subfamily. Heterodimer of a large membrane-associated beta subunit and a small pyruvoyl-containing alpha subunit. It depends on pyruvate as a cofactor. In terms of processing, is synthesized initially as an inactive proenzyme. Formation of the active enzyme involves a self-maturation process in which the active site pyruvoyl group is generated from an internal serine residue via an autocatalytic post-translational modification. Two non-identical subunits are generated from the proenzyme in this reaction, and the pyruvate is formed at the N-terminus of the alpha chain, which is derived from the carboxyl end of the proenzyme. The post-translation cleavage follows an unusual pathway, termed non-hydrolytic serinolysis, in which the side chain hydroxyl group of the serine supplies its oxygen atom to form the C-terminus of the beta chain, while the remainder of the serine residue undergoes an oxidative deamination to produce ammonia and the pyruvoyl prosthetic group on the alpha chain.

It is found in the cell membrane. It catalyses the reaction a 1,2-diacyl-sn-glycero-3-phospho-L-serine + H(+) = a 1,2-diacyl-sn-glycero-3-phosphoethanolamine + CO2. It functions in the pathway phospholipid metabolism; phosphatidylethanolamine biosynthesis; phosphatidylethanolamine from CDP-diacylglycerol: step 2/2. In terms of biological role, catalyzes the formation of phosphatidylethanolamine (PtdEtn) from phosphatidylserine (PtdSer). The protein is Phosphatidylserine decarboxylase proenzyme of Brucella anthropi (strain ATCC 49188 / DSM 6882 / CCUG 24695 / JCM 21032 / LMG 3331 / NBRC 15819 / NCTC 12168 / Alc 37) (Ochrobactrum anthropi).